The chain runs to 715 residues: ATP-dependent RecD2 DNA helicase (715 aa).

The segment at 1 to 150 (MSAALPAEPF…STLHKMVSSW (150 aa)) is not required for helicase activity. Residues Gln-343 and 363-367 (GTGKS) contribute to the ATP site. 2 consecutive DNA-binding regions follow at residues Gly-391 and 407-414 (TVHRLLGY). Residue Gln-466 coordinates ATP. Val-470 is a DNA-binding region. Arg-493 serves as a coordination point for ATP. DNA-binding regions lie at residues 554–555 (RK), 596–604 (NDYNNEIFN), and 644–647 (TVHR). Position 679 (Arg-679) interacts with ATP.

It belongs to the RecD family. RecD2 subfamily. Monomer; homodimers seem to be inactive.

The catalysed reaction is Couples ATP hydrolysis with the unwinding of duplex DNA at the replication fork by translocating in the 5'-3' direction. This creates two antiparallel DNA single strands (ssDNA). The leading ssDNA polymer is the template for DNA polymerase III holoenzyme which synthesizes a continuous strand.. It catalyses the reaction ATP + H2O = ADP + phosphate + H(+). DNA-dependent ATPase (ssDNA stimulates the ATPase better than dsDNA) and ATP-dependent 5'-3' DNA helicase. Plays a role in an antioxidant pathway. Involved in DNA damage repair and/or recombination. Appears to move along DNA in single base steps, powered by hydrolysis of 1 molecule of ATP. Has low processivity, unwinds about 15-20 base pairs/second. Short (20 bp) substrates with 5'-overhangs or forked ends are the best substrates, is much less efficient on 52 or 76 bp substrates with 5'-overhangs. The presence of single-stranded DNA-binding protein (SSB) increases unwinding 4-5 fold. Has no activity on blunt DNA or DNA with 3'-overhangs. Requires at least 10 bases of 5'-ssDNA for helicase activity. The chain is ATP-dependent RecD2 DNA helicase from Deinococcus radiodurans (strain ATCC 13939 / DSM 20539 / JCM 16871 / CCUG 27074 / LMG 4051 / NBRC 15346 / NCIMB 9279 / VKM B-1422 / R1).